Reading from the N-terminus, the 129-residue chain is Chorion class A protein L11 (129 aa).

Residues 1–21 (MSTFAFLLLCVQACLIQNVYG) form the signal peptide. Residues 22 to 64 (QCLGRGLGGCGCGGGLGGYGLGYGLGGYGGGYGYGGYGGGYYG) form a left arm region. Residues 65-112 (GYGGEGVGNVGVAGVLPVGGVTAVGGRVPIIGGVEFGGPACAGGCVSI) are central domain. Residues 113-129 (CGHCAPTCGCGYGGLYY) are right arm.

It belongs to the chorion protein family.

In terms of biological role, this protein is one of many from the eggshell of the silk moth. The polypeptide is Chorion class A protein L11 (Bombyx mori (Silk moth)).